We begin with the raw amino-acid sequence, 149 residues long: MLSITARNLASALRSSLVGTSSRVAAVRCLHGTEESAEEFDKRYEKYFSREGIDGWEIRKGMNDLLGMDLVPSPKIIEAGLRASRRVNDIALAIRWLEGCKDKCGDQKATLYPYLLEKITPTLQELGIPTIEELGYDKPELALKSVYDA.

Belongs to the cytochrome c oxidase subunit 5A family. As to quaternary structure, component of the cytochrome c oxidase (complex IV, CIV), a multisubunit enzyme composed of a catalytic core of 3 subunits and several supernumerary subunits. The complex exists as a monomer or a dimer and forms supercomplexes (SCs) in the inner mitochondrial membrane with ubiquinol-cytochrome c oxidoreductase (cytochrome b-c1 complex, complex III, CIII).

It localises to the mitochondrion inner membrane. It participates in energy metabolism; oxidative phosphorylation. Component of the cytochrome c oxidase, the last enzyme in the mitochondrial electron transport chain which drives oxidative phosphorylation. The respiratory chain contains 3 multisubunit complexes succinate dehydrogenase (complex II, CII), ubiquinol-cytochrome c oxidoreductase (cytochrome b-c1 complex, complex III, CIII) and cytochrome c oxidase (complex IV, CIV), that cooperate to transfer electrons derived from NADH and succinate to molecular oxygen, creating an electrochemical gradient over the inner membrane that drives transmembrane transport and the ATP synthase. Cytochrome c oxidase is the component of the respiratory chain that catalyzes the reduction of oxygen to water. Electrons originating from reduced cytochrome c in the intermembrane space (IMS) are transferred via the dinuclear copper A center (CU(A)) of subunit 2 and heme A of subunit 1 to the active site in subunit 1, a binuclear center (BNC) formed by heme A3 and copper B (CU(B)). The BNC reduces molecular oxygen to 2 water molecules using 4 electrons from cytochrome c in the IMS and 4 protons from the mitochondrial matrix. This chain is Cytochrome c oxidase subunit 5A, mitochondrial, found in Drosophila melanogaster (Fruit fly).